Consider the following 753-residue polypeptide: Rho guanine nucleotide exchange factor gef1 (753 aa).

3 disordered regions span residues 52–150, 175–194, and 200–245; these read SNSY…DRNR, TLRKIHTNTSSNGTSRRVSG, and AQNS…ASLL. Composition is skewed to polar residues over residues 94-105, 114-141, 181-191, and 200-220; these read DPQTPNTPPVSS, GSFNLPNSNMSHSLNGDSTASNSSTLTP, TNTSSNGTSRR, and AQNSSETSSNRTSAYLPGSST. Low complexity predominate over residues 230–245; that stretch reads TLASMPSSHSSTASLL. The DH domain occupies 311-507; sequence KRANLIKELV…QELISGINQK (197 aa).

Interacts with cdc42.

It is found in the cytoplasm. In terms of biological role, has a role in the control of cell polarity and cytokinesis. Involved in bipolar growth, via modulation of cdc42-shk1-orb6 signaling, and septum formation. Stimulates guanine nucleotide exchange of cdc42. The polypeptide is Rho guanine nucleotide exchange factor gef1 (gef1) (Schizosaccharomyces pombe (strain 972 / ATCC 24843) (Fission yeast)).